A 410-amino-acid polypeptide reads, in one-letter code: Probable intron-encoded endonuclease bI1 (410 aa).

The segment at 1–131 (MRLLKTHPIL…VLMMAIAFLG (131 aa)) is COB exon 1 encoded. Helical transmembrane passes span 32–52 (FGSLLGVCLIIQILTGVFLAM), 75–95 (GWLIRYLHANTASFFFIFVYL), and 112–132 (LLWSIGVIILVLMMAIAFLGF). A COB intron 1 encoded region spans residues 132 to 410 (FNGQKYMCFY…KKNYIVKVIK (279 aa)). Residues 196 to 286 (PFSGIYMIVN…LETLKPEYNI (91 aa)) enclose the GIY-YIG domain.

To endonucleases of group I introns of fungi and phage. In terms of processing, the mature protein may arise from proteolytic cleavage of an in-frame translation of COB exon 1 plus intron 1, containing the bI1 open reading frame.

The protein resides in the mitochondrion. The protein localises to the membrane. Functionally, mitochondrial DNA endonuclease involved in intron homing. This is Probable intron-encoded endonuclease bI1 (bI1) from Mycosarcoma maydis (Corn smut fungus).